A 665-amino-acid chain; its full sequence is Probable potassium transport system protein Kup (665 aa).

Residues 1–18 (MASEAPHASAPDCAPASS) are compositionally biased toward low complexity. Residues 1–31 (MASEAPHASAPDCAPASSDIPQQDGGSTNGH) are disordered. Helical transmembrane passes span 40-60 (FFAL…TSPL), 83-103 (VVSL…VVFI), 131-151 (LVFV…VITP), 171-191 (GVTN…LFFI), 202-222 (LFGP…LMNL), 245-265 (GLTG…VEAL), 281-301 (WLFF…AFAL), 332-352 (LVLL…TGAF), 380-400 (IFVP…MFTF), 409-429 (AYGL…FIVM), 435-455 (WSMP…ITFL), and 462-482 (FFSG…IMAT).

It belongs to the HAK/KUP transporter (TC 2.A.72) family.

It localises to the cell inner membrane. It carries out the reaction K(+)(in) + H(+)(in) = K(+)(out) + H(+)(out). Functionally, transport of potassium into the cell. Likely operates as a K(+):H(+) symporter. This chain is Probable potassium transport system protein Kup, found in Caulobacter vibrioides (strain ATCC 19089 / CIP 103742 / CB 15) (Caulobacter crescentus).